The following is a 50-amino-acid chain: Disintegrin pyramidin-A (50 aa).

In terms of domain architecture, Disintegrin spans 1 to 47 (DCASGPCCRDCKFLKEGTICKRARGDNMDDYCNGKTCDCPRNPHKGE). 4 disulfide bridges follow: C2/C11, C7/C32, C8/C37, and C20/C39. The Cell attachment site motif lies at 24–26 (RGD).

This sequence belongs to the venom metalloproteinase (M12B) family. P-II subfamily. P-IIa sub-subfamily. In terms of assembly, monomer (disintegrin). In terms of tissue distribution, expressed by the venom gland.

It is found in the secreted. Functionally, inhibits ADP-induced human platelet aggregation. The sequence is that of Disintegrin pyramidin-A from Echis pyramidum leakeyi (Leakey's carpet viper).